The chain runs to 160 residues: uncharacterized protein (160 aa).

This is an uncharacterized protein from Human cytomegalovirus (strain AD169) (HHV-5).